A 491-amino-acid polypeptide reads, in one-letter code: Limb region 1 homolog-like protein (491 aa).

Over Met-1–Thr-20 the chain is Extracellular. A helical transmembrane segment spans residues Ile-21 to Phe-41. Residues Lys-42 to Lys-59 lie on the Cytoplasmic side of the membrane. The helical transmembrane segment at Ile-60–Pro-80 threads the bilayer. Residues Ile-81 to Asn-111 lie on the Extracellular side of the membrane. A helical transmembrane segment spans residues Leu-112 to Thr-132. Topologically, residues Glu-133 to Ala-152 are cytoplasmic. Residues Val-153–Leu-173 traverse the membrane as a helical segment. Over His-174–Tyr-192 the chain is Extracellular. Residues Leu-193 to Leu-213 form a helical membrane-spanning segment. Residues Ser-214–Asn-292 are Cytoplasmic-facing. A helical membrane pass occupies residues Leu-293–Val-313. Residues Cys-314–Ser-346 lie on the Extracellular side of the membrane. Residues Leu-347–Phe-367 form a helical membrane-spanning segment. The Cytoplasmic portion of the chain corresponds to Tyr-368–Thr-384. Residues Leu-385–Phe-405 traverse the membrane as a helical segment. Topologically, residues Ser-406–Gly-427 are extracellular. Residues Ser-428–Ile-448 traverse the membrane as a helical segment. The Cytoplasmic segment spans residues Asn-449–His-491.

This sequence belongs to the LIMR family. In terms of assembly, dimer. Can also form higher oligomers.

It is found in the cell membrane. The protein resides in the endoplasmic reticulum membrane. May play a role in lymphocyte development by negatively regulating the canonical Wnt signaling pathway. May act as a LCN1 receptor. The polypeptide is Limb region 1 homolog-like protein (lmbr1l) (Danio rerio (Zebrafish)).